A 281-amino-acid polypeptide reads, in one-letter code: Pantothenate synthetase (281 aa).

30–37 (MGALHRGH) contacts ATP. Histidine 37 acts as the Proton donor in catalysis. Position 61 (glutamine 61) interacts with (R)-pantoate. Glutamine 61 contributes to the beta-alanine binding site. 147–150 (GEKD) provides a ligand contact to ATP. Glutamine 153 provides a ligand contact to (R)-pantoate. ATP is bound by residues isoleucine 176 and 184 to 187 (LSSR).

The protein belongs to the pantothenate synthetase family. Homodimer.

It localises to the cytoplasm. The enzyme catalyses (R)-pantoate + beta-alanine + ATP = (R)-pantothenate + AMP + diphosphate + H(+). The protein operates within cofactor biosynthesis; (R)-pantothenate biosynthesis; (R)-pantothenate from (R)-pantoate and beta-alanine: step 1/1. In terms of biological role, catalyzes the condensation of pantoate with beta-alanine in an ATP-dependent reaction via a pantoyl-adenylate intermediate. The polypeptide is Pantothenate synthetase (Porphyromonas gingivalis (strain ATCC 33277 / DSM 20709 / CIP 103683 / JCM 12257 / NCTC 11834 / 2561)).